A 340-amino-acid polypeptide reads, in one-letter code: MRHRGPEEEACGVWLDAAALKRRKMQTHLIKLGTKMLPLLPGERKPNDPFTQRRGTRQTSIASFVTLQSGMASGGNQKNIFSLKENQTNKECKRTQLDCLDDGLLSPLVTSAPADIQEAGHPRSPQISGCQGLEMSSLTMMSLTQPDVLMGTGESKGPLDSSFSQYLERSCLLDQREAKRKGEGLRESKTDCPGMGSHIRPPGSKCHQPLDKAEMGKRGPTKENRQAPVHLQTYRSGSCSRKKTLLVTESPCPLSLFPWDSERSDRDSWSQLFTEDSQGQQVIAHNTKMPFRDVTNARNQGSGQFPDSPQAQGQDGPAQLHLQSYLLFTQDSEGNRVIRH.

The segment at 175 to 340 (QREAKRKGEG…DSEGNRVIRH (166 aa)) is interaction with AURKA. Over residues 178-190 (AKRKGEGLRESKT) the composition is skewed to basic and acidic residues. The interval 178–209 (AKRKGEGLRESKTDCPGMGSHIRPPGSKCHQP) is disordered. The segment at 266–340 (RDSWSQLFTE…DSEGNRVIRH (75 aa)) is interaction with RBBP8/CtIP. Residue serine 277 is modified to Phosphoserine. Residues 293–317 (DVTNARNQGSGQFPDSPQAQGQDGP) are disordered. Residues 296–313 (NARNQGSGQFPDSPQAQG) are compositionally biased toward polar residues.

This sequence belongs to the AUNIP family. Interacts (via C-terminus) with AURKA (via C-terminus). Interacts (via N-terminus) with NIN; this interaction blocks NIN phosphorylation by both AURKA and GSK3B. Identified in a complex with NIN and AURKA. Interacts with RBBP8/CtIP.

Its subcellular location is the nucleus. The protein localises to the chromosome. It localises to the cytoplasm. The protein resides in the cytoskeleton. It is found in the microtubule organizing center. Its subcellular location is the centrosome. The protein localises to the spindle pole. DNA-binding protein that accumulates at DNA double-strand breaks (DSBs) following DNA damage and promotes DNA resection and homologous recombination. Serves as a sensor of DNA damage: binds DNA with a strong preference for DNA substrates that mimic structures generated at stalled replication forks, and anchors RBBP8/CtIP to DSB sites to promote DNA end resection and ensuing homologous recombination repair. Inhibits non-homologous end joining (NHEJ). Required for the dynamic movement of AURKA at the centrosomes and spindle apparatus during the cell cycle. The chain is Aurora kinase A- and ninein-interacting protein from Mus musculus (Mouse).